We begin with the raw amino-acid sequence, 361 residues long: S-adenosylmethionine:tRNA ribosyltransferase-isomerase (361 aa).

The protein belongs to the QueA family. Monomer.

It localises to the cytoplasm. It catalyses the reaction 7-aminomethyl-7-carbaguanosine(34) in tRNA + S-adenosyl-L-methionine = epoxyqueuosine(34) in tRNA + adenine + L-methionine + 2 H(+). It participates in tRNA modification; tRNA-queuosine biosynthesis. Transfers and isomerizes the ribose moiety from AdoMet to the 7-aminomethyl group of 7-deazaguanine (preQ1-tRNA) to give epoxyqueuosine (oQ-tRNA). This is S-adenosylmethionine:tRNA ribosyltransferase-isomerase from Rhizobium etli (strain ATCC 51251 / DSM 11541 / JCM 21823 / NBRC 15573 / CFN 42).